The primary structure comprises 491 residues: Aspartyl/glutamyl-tRNA(Asn/Gln) amidotransferase subunit B (491 aa).

The protein belongs to the GatB/GatE family. GatB subfamily. As to quaternary structure, heterotrimer of A, B and C subunits.

It carries out the reaction L-glutamyl-tRNA(Gln) + L-glutamine + ATP + H2O = L-glutaminyl-tRNA(Gln) + L-glutamate + ADP + phosphate + H(+). It catalyses the reaction L-aspartyl-tRNA(Asn) + L-glutamine + ATP + H2O = L-asparaginyl-tRNA(Asn) + L-glutamate + ADP + phosphate + 2 H(+). Allows the formation of correctly charged Asn-tRNA(Asn) or Gln-tRNA(Gln) through the transamidation of misacylated Asp-tRNA(Asn) or Glu-tRNA(Gln) in organisms which lack either or both of asparaginyl-tRNA or glutaminyl-tRNA synthetases. The reaction takes place in the presence of glutamine and ATP through an activated phospho-Asp-tRNA(Asn) or phospho-Glu-tRNA(Gln). This Paraburkholderia phytofirmans (strain DSM 17436 / LMG 22146 / PsJN) (Burkholderia phytofirmans) protein is Aspartyl/glutamyl-tRNA(Asn/Gln) amidotransferase subunit B.